We begin with the raw amino-acid sequence, 255 residues long: tRNA (guanine-N(1)-)-methyltransferase (255 aa).

S-adenosyl-L-methionine is bound by residues G113 and 133-138 (IGDYVL).

It belongs to the RNA methyltransferase TrmD family. In terms of assembly, homodimer.

Its subcellular location is the cytoplasm. The enzyme catalyses guanosine(37) in tRNA + S-adenosyl-L-methionine = N(1)-methylguanosine(37) in tRNA + S-adenosyl-L-homocysteine + H(+). Functionally, specifically methylates guanosine-37 in various tRNAs. In Salmonella choleraesuis (strain SC-B67), this protein is tRNA (guanine-N(1)-)-methyltransferase.